We begin with the raw amino-acid sequence, 335 residues long: tRNA-splicing endonuclease (335 aa).

Catalysis depends on residues Tyr-269, His-280, and Lys-311.

The protein belongs to the tRNA-intron endonuclease family. Archaeal long subfamily. Homodimer.

It catalyses the reaction pretRNA = a 3'-half-tRNA molecule with a 5'-OH end + a 5'-half-tRNA molecule with a 2',3'-cyclic phosphate end + an intron with a 2',3'-cyclic phosphate and a 5'-hydroxyl terminus.. Functionally, endonuclease that removes tRNA introns. Cleaves pre-tRNA at the 5'- and 3'-splice sites to release the intron. The products are an intron and two tRNA half-molecules bearing 2',3' cyclic phosphate and 5'-OH termini. Recognizes a pseudosymmetric substrate in which 2 bulged loops of 3 bases are separated by a stem of 4 bp. The protein is tRNA-splicing endonuclease of Haloarcula marismortui (strain ATCC 43049 / DSM 3752 / JCM 8966 / VKM B-1809) (Halobacterium marismortui).